The following is a 110-amino-acid chain: Large ribosomal subunit protein uL22 (110 aa).

The protein belongs to the universal ribosomal protein uL22 family. Part of the 50S ribosomal subunit.

This protein binds specifically to 23S rRNA; its binding is stimulated by other ribosomal proteins, e.g. L4, L17, and L20. It is important during the early stages of 50S assembly. It makes multiple contacts with different domains of the 23S rRNA in the assembled 50S subunit and ribosome. Its function is as follows. The globular domain of the protein is located near the polypeptide exit tunnel on the outside of the subunit, while an extended beta-hairpin is found that lines the wall of the exit tunnel in the center of the 70S ribosome. The sequence is that of Large ribosomal subunit protein uL22 from Pseudomonas aeruginosa (strain LESB58).